Here is a 107-residue protein sequence, read N- to C-terminus: Transmembrane protein 213 (107 aa).

Positions 1–27 are cleaved as a signal peptide; the sequence is MQRLPAATRATLILSLAFASLHSACSA. Residues 28–70 lie on the Extracellular side of the membrane; that stretch reads EASSSNSSSLTAHHPDPGTLEQCLNVDFCPQAARCCRTGVDEY. A helical transmembrane segment spans residues 71 to 91; it reads GWIAAAVGWSLWFLTLILLCV. At 92 to 107 the chain is on the cytoplasmic side; it reads DKLMKLTPDEPKDLQA.

It localises to the membrane. The polypeptide is Transmembrane protein 213 (TMEM213) (Homo sapiens (Human)).